Consider the following 1034-residue polypeptide: Error-prone DNA polymerase (1034 aa).

This sequence belongs to the DNA polymerase type-C family. DnaE2 subfamily.

The protein resides in the cytoplasm. It catalyses the reaction DNA(n) + a 2'-deoxyribonucleoside 5'-triphosphate = DNA(n+1) + diphosphate. In terms of biological role, DNA polymerase involved in damage-induced mutagenesis and translesion synthesis (TLS). It is not the major replicative DNA polymerase. The polypeptide is Error-prone DNA polymerase (Pseudomonas fluorescens (strain ATCC BAA-477 / NRRL B-23932 / Pf-5)).